The sequence spans 179 residues: Transcription factor 21 (179 aa).

The segment at 19–88 (DCDSLKVDSN…VQRNAANARE (70 aa)) is disordered. Composition is skewed to polar residues over residues 30-49 (EFGTSNESTEEGSNCENGSP) and 70-80 (SGVSQEGKQVQ). The bHLH domain occupies 79–131 (VQRNAANARERARMRVLSKAFSRLKTTLPWVPPDTKLSKLDTLRLASSYIAHL).

As to quaternary structure, efficient DNA binding requires dimerization with another bHLH protein. Forms a heterodimer with TCF3 and binds the E box (5'-CANNTG-3'). In terms of tissue distribution, expressed at high levels in lung, kidney, gut, heart, ovary and podocytes (visceral glomerular epithelial cells). Also found in spleen, large intestine, uterus, bladder and testis.

The protein resides in the nucleus. Its function is as follows. Involved in epithelial-mesenchymal interactions in kidney and lung morphogenesis that include epithelial differentiation and branching morphogenesis. May be involved in the organogenesis of the spleen and heart and in cardiac and coronary artery development. May function in the development and sex differentiation of gonad via transcriptional regulation of AD4BP/SF-1. The polypeptide is Transcription factor 21 (Tcf21) (Mus musculus (Mouse)).